The chain runs to 386 residues: Oxytocin receptor (386 aa).

Positions 1–31 (MEGVLAANWSAEAVNSSAAPPEAEGNRTAGP) are disordered. The Extracellular segment spans residues 1–38 (MEGVLAANWSAEAVNSSAAPPEAEGNRTAGPPQRNEAL). Asn8, Asn15, and Asn26 each carry an N-linked (GlcNAc...) asparagine glycan. The chain crosses the membrane as a helical span at residues 39-63 (ARVEVAVLCLILFLALSGNACVLLA). The Cytoplasmic segment spans residues 64–74 (LRTTRHKHSRL). The chain crosses the membrane as a helical span at residues 75–97 (FFFMKHLSIADLVVAVFQVLPQL). At 98 to 113 (LWDITFRFYGPDLLCR) the chain is on the extracellular side. Cys112 and Cys187 are joined by a disulfide. Residues 114 to 135 (LVKYLQVVGMFASTYLLLLMSL) form a helical membrane-spanning segment. Over 136-154 (DRCLAICQPLRALRRPADR) the chain is Cytoplasmic. Residues 155–175 (LAVLATWLGCLVASAPQVHIF) traverse the membrane as a helical segment. Residues 176-202 (SLREVADGVFDCWAVFIQPWGPKAYIT) are Extracellular-facing. A helical transmembrane segment spans residues 203–225 (WITLAVYIVPVIVLAACYGLISF). At 226–277 (KIWQNLRLKTAAEAAEAIAGTEGAAAGSRGRAALARVSSVKLISKAKIRTVK) the chain is on the cytoplasmic side. The helical transmembrane segment at 278–296 (MTFIIVLAFIVCWTPFFFV) threads the bilayer. Over 297-311 (QMWSVWDADAPKEAS) the chain is Extracellular. The chain crosses the membrane as a helical span at residues 312-334 (AFIIAMLLASLNSCCNPWIYMLF). The Cytoplasmic portion of the chain corresponds to 335–386 (TGHLFHELVQRFLCCSSSHLKTSRPGETSVSKKSNSSTFVLSQHSSSQKSCS). Positions 355–375 (KTSRPGETSVSKKSNSSTFVL) are enriched in polar residues. The interval 355-386 (KTSRPGETSVSKKSNSSTFVLSQHSSSQKSCS) is disordered. Phosphoserine is present on residues Ser368 and Ser370. Residues 376–386 (SQHSSSQKSCS) are compositionally biased toward low complexity.

It belongs to the G-protein coupled receptor 1 family. Vasopressin/oxytocin receptor subfamily.

It is found in the cell membrane. Its function is as follows. Receptor for oxytocin. The activity of this receptor is mediated by G proteins which activate a phosphatidylinositol-calcium second messenger system. The polypeptide is Oxytocin receptor (OXTR) (Sus scrofa (Pig)).